A 281-amino-acid polypeptide reads, in one-letter code: Ornithine lipid ester-linked acyl 2-hydroxylase (281 aa).

Residues 1–24 (MTESPLSAPAPTSNQSPAPEQTFG) are compositionally biased toward polar residues. Positions 1–29 (MTESPLSAPAPTSNQSPAPEQTFGTAGIA) are disordered.

Belongs to the aspartyl/asparaginyl beta-hydroxylase family.

It carries out the reaction an N(2)-[(3R)-3-(2-saturated-acyloxy)acyl]-L-ornithine lipid + 2-oxoglutarate + O2 = a 2-hydroxyornithine lipid + succinate + CO2. Its pathway is lipid metabolism. Involved in the biosynthesis of ornithine lipids (OLs), which are phosphorus-free membrane lipids. Catalyzes the hydroxylation at the 2 position of the secondary fatty acid of OL. Contributes to symbiotic performance and acid tolerance. The protein is Ornithine lipid ester-linked acyl 2-hydroxylase of Rhizobium tropici.